The following is a 633-amino-acid chain: 1-deoxy-D-xylulose-5-phosphate synthase (633 aa).

Positions M1 to S12 are enriched in polar residues. The interval M1–N21 is disordered. Thiamine diphosphate contacts are provided by residues H86 and G127–A129. D158 serves as a coordination point for Mg(2+). Thiamine diphosphate is bound by residues G159–S160, N187, and E377. N187 serves as a coordination point for Mg(2+).

It belongs to the transketolase family. DXPS subfamily. Homodimer. The cofactor is Mg(2+). It depends on thiamine diphosphate as a cofactor.

It carries out the reaction D-glyceraldehyde 3-phosphate + pyruvate + H(+) = 1-deoxy-D-xylulose 5-phosphate + CO2. The protein operates within metabolic intermediate biosynthesis; 1-deoxy-D-xylulose 5-phosphate biosynthesis; 1-deoxy-D-xylulose 5-phosphate from D-glyceraldehyde 3-phosphate and pyruvate: step 1/1. Functionally, catalyzes the acyloin condensation reaction between C atoms 2 and 3 of pyruvate and glyceraldehyde 3-phosphate to yield 1-deoxy-D-xylulose-5-phosphate (DXP). In Deinococcus geothermalis (strain DSM 11300 / CIP 105573 / AG-3a), this protein is 1-deoxy-D-xylulose-5-phosphate synthase.